A 1357-amino-acid chain; its full sequence is DNA-directed RNA polymerase subunit beta (1357 aa).

This sequence belongs to the RNA polymerase beta chain family. The RNAP catalytic core consists of 2 alpha, 1 beta, 1 beta' and 1 omega subunit. When a sigma factor is associated with the core the holoenzyme is formed, which can initiate transcription.

It carries out the reaction RNA(n) + a ribonucleoside 5'-triphosphate = RNA(n+1) + diphosphate. Functionally, DNA-dependent RNA polymerase catalyzes the transcription of DNA into RNA using the four ribonucleoside triphosphates as substrates. This Pseudomonas entomophila (strain L48) protein is DNA-directed RNA polymerase subunit beta.